Reading from the N-terminus, the 432-residue chain is Alpha-galactosidase (432 aa).

Position 2–68 (2–68) interacts with NAD(+); the sequence is KKITFIGAGS…PSVAINSYDD (67 aa). A substrate-binding site is contributed by N148. Position 169 (C169) interacts with Mn(2+). H170 acts as the Proton donor in catalysis. H199 serves as a coordination point for Mn(2+).

This sequence belongs to the glycosyl hydrolase 4 family. Homodimer. It depends on Mn(2+) as a cofactor. Requires NAD(+) as cofactor.

Its subcellular location is the cytoplasm. The catalysed reaction is Hydrolysis of terminal, non-reducing alpha-D-galactose residues in alpha-D-galactosides, including galactose oligosaccharides, galactomannans and galactolipids.. In terms of biological role, catalyzes the hydrolysis of melibiose and alpha-galactosides of the raffinose family of oligosaccharides (RFOs) such as raffinose and stachyose. Cannot act on polymeric substrates such as locust bean gum. The sequence is that of Alpha-galactosidase from Bacillus subtilis (strain 168).